We begin with the raw amino-acid sequence, 157 residues long: MEKIPMTGAGFVALEEELRFRQQVERPRIISAISEARAHGDLSENAEYHAAKELQSLNEGRIAELEDKISRAEVIDVSKLSGDIVKFGATVTLVDEDTEEERVWQIVGDSEADAKAGRISISSPVARALIGKKKGSSVEVVTPKGARSFEIVEVRWA.

This sequence belongs to the GreA/GreB family.

Necessary for efficient RNA polymerase transcription elongation past template-encoded arresting sites. The arresting sites in DNA have the property of trapping a certain fraction of elongating RNA polymerases that pass through, resulting in locked ternary complexes. Cleavage of the nascent transcript by cleavage factors such as GreA or GreB allows the resumption of elongation from the new 3'terminus. GreA releases sequences of 2 to 3 nucleotides. In Azorhizobium caulinodans (strain ATCC 43989 / DSM 5975 / JCM 20966 / LMG 6465 / NBRC 14845 / NCIMB 13405 / ORS 571), this protein is Transcription elongation factor GreA.